The sequence spans 487 residues: GDP-Man:Man(3)GlcNAc(2)-PP-Dol alpha-1,2-mannosyltransferase (487 aa).

At 1-16 (MAGILCLCGMMRLLTA) the chain is on the lumenal side. Residues 17–37 (LFIPVLIASIGLCLVLVLLFI) form a helical membrane-spanning segment. At 38–231 (CTRLWIQRKK…SNNPVLSRLK (194 aa)) the chain is on the cytoplasmic side. The helical intramembrane region spans 232-252 (LIYYYLFAVIYGWVGSCSDVI). At 253-394 (MVNSTWTFAH…IGLHTMWNEH (142 aa)) the chain is on the cytoplasmic side. An intramembrane region (helical) is located at residues 395 to 415 (FGIGIVECMAAGTIILAHNSG). Residues 416–487 (GPKLDIVVPY…FLASSEPLFM (72 aa)) lie on the Cytoplasmic side of the membrane.

It belongs to the glycosyltransferase group 1 family. Glycosyltransferase 4 subfamily.

The protein localises to the endoplasmic reticulum membrane. The catalysed reaction is an alpha-D-Man-(1-&gt;3)-[alpha-D-Man-(1-&gt;6)]-beta-D-Man-(1-&gt;4)-beta-D-GlcNAc-(1-&gt;4)-alpha-D-GlcNAc-diphospho-di-trans,poly-cis-dolichol + 2 GDP-alpha-D-mannose = an alpha-D-Man-(1-&gt;2)-alpha-D-Man-(1-&gt;2)-alpha-D-Man-(1-&gt;3)-[alpha-D-Man-(1-&gt;6)]-beta-D-Man-(1-&gt;4)-beta-D-GlcNAc-(1-&gt;4)-alpha-D-GlcNAc-diphospho-di-trans,poly-cis-dolichol + 2 GDP + 2 H(+). It participates in protein modification; protein glycosylation. Its function is as follows. GDP-Man:Man(3)GlcNAc(2)-PP-Dol alpha-1,2-mannosyltransferase that operates in the biosynthetic pathway of dolichol-linked oligosaccharides, the glycan precursors employed in protein asparagine (N)-glycosylation. The assembly of dolichol-linked oligosaccharides begins on the cytosolic side of the endoplasmic reticulum membrane and finishes in its lumen. The sequential addition of sugars to dolichol pyrophosphate produces dolichol-linked oligosaccharides containing fourteen sugars, including two GlcNAcs, nine mannoses and three glucoses. Once assembled, the oligosaccharide is transferred from the lipid to nascent proteins by oligosaccharyltransferases. Catalyzes, on the cytoplasmic face of the endoplasmic reticulum, the addition of the fourth and fifth mannose residues to the dolichol-linked oligosaccharide chain, to produce Man(5)GlcNAc(2)-PP-dolichol core oligosaccharide. Man(5)GlcNAc(2)-PP-dolichol is a substrate for ALG3, the following enzyme in the biosynthetic pathway. The polypeptide is GDP-Man:Man(3)GlcNAc(2)-PP-Dol alpha-1,2-mannosyltransferase (alg11) (Xenopus tropicalis (Western clawed frog)).